A 391-amino-acid polypeptide reads, in one-letter code: Ferrochelatase (391 aa).

Positions 196 and 281 each coordinate Fe cation.

It belongs to the ferrochelatase family.

Its subcellular location is the cytoplasm. It catalyses the reaction heme b + 2 H(+) = protoporphyrin IX + Fe(2+). It participates in porphyrin-containing compound metabolism; protoheme biosynthesis; protoheme from protoporphyrin-IX: step 1/1. In terms of biological role, catalyzes the ferrous insertion into protoporphyrin IX. The sequence is that of Ferrochelatase from Prochlorococcus marinus (strain NATL1A).